The sequence spans 78 residues: MHEQLPLHDRALEARLIELETRLSFQEQALNELSEALADARLTGARNAELIRHLLEDLGKVRSTLFADAADEPPPPHY.

This sequence belongs to the SlyX family.

The sequence is that of Protein SlyX homolog from Xanthomonas euvesicatoria pv. vesicatoria (strain 85-10) (Xanthomonas campestris pv. vesicatoria).